Consider the following 233-residue polypeptide: Phosphatidylserine decarboxylase proenzyme (233 aa).

The Schiff-base intermediate with substrate; via pyruvic acid role is filled by S190. A Pyruvic acid (Ser); by autocatalysis modification is found at S190.

This sequence belongs to the phosphatidylserine decarboxylase family. PSD-A subfamily. Heterodimer of a large membrane-associated beta subunit and a small pyruvoyl-containing alpha subunit. Requires pyruvate as cofactor. In terms of processing, is synthesized initially as an inactive proenzyme. Formation of the active enzyme involves a self-maturation process in which the active site pyruvoyl group is generated from an internal serine residue via an autocatalytic post-translational modification. Two non-identical subunits are generated from the proenzyme in this reaction, and the pyruvate is formed at the N-terminus of the alpha chain, which is derived from the carboxyl end of the proenzyme. The post-translation cleavage follows an unusual pathway, termed non-hydrolytic serinolysis, in which the side chain hydroxyl group of the serine supplies its oxygen atom to form the C-terminus of the beta chain, while the remainder of the serine residue undergoes an oxidative deamination to produce ammonia and the pyruvoyl prosthetic group on the alpha chain.

Its subcellular location is the cell membrane. The catalysed reaction is a 1,2-diacyl-sn-glycero-3-phospho-L-serine + H(+) = a 1,2-diacyl-sn-glycero-3-phosphoethanolamine + CO2. Its pathway is phospholipid metabolism; phosphatidylethanolamine biosynthesis; phosphatidylethanolamine from CDP-diacylglycerol: step 2/2. Catalyzes the formation of phosphatidylethanolamine (PtdEtn) from phosphatidylserine (PtdSer). The chain is Phosphatidylserine decarboxylase proenzyme from Azorhizobium caulinodans (strain ATCC 43989 / DSM 5975 / JCM 20966 / LMG 6465 / NBRC 14845 / NCIMB 13405 / ORS 571).